Reading from the N-terminus, the 1481-residue chain is Cystic fibrosis transmembrane conductance regulator (1481 aa).

The Cytoplasmic portion of the chain corresponds to 1-77 (MQRSPLEKAS…KLINALRRCF (77 aa)). The helical transmembrane segment at 78–98 (FWRFMFYGIILYLGEVTKAVQ) threads the bilayer. The 285-residue stretch at 81–365 (FMFYGIILYL…WAVQTWYDSL (285 aa)) folds into the ABC transmembrane type-1 1 domain. At 99–122 (PLLLGRIIASYDPDNEAERSIAIY) the chain is on the extracellular side. The helical transmembrane segment at 123–146 (LGIGLCLLFIVRTLLLHPAIFGLH) threads the bilayer. At 147 to 195 (HIGMQMRIAMFSLIYKKTLKLSSRVLDKISIGQLVSLLSNNLNKFDEGL) the chain is on the cytoplasmic side. A helical membrane pass occupies residues 196–216 (ALAHFVWIAPLQVTLLMGLLW). Residues 217–222 (DLLQAS) are Extracellular-facing. Residues 223–243 (AFCGLAFLIVLALFQAGLGRM) traverse the membrane as a helical segment. Over 244-298 (MMKYRDQRAGKINERLVITSEMIENIQSVKAYCWEEAMEKMIENLRQTELKLTRK) the chain is Cytoplasmic. The helical transmembrane segment at 299-319 (AAYVRYFNSSAFFFSGFFVVF) threads the bilayer. The Extracellular segment spans residues 320–339 (LSVLPYALIKGIVLRRIFTT). A helical transmembrane segment spans residues 340–358 (ISFCIVLRMAVTRQFPWAV). At 359–858 (QTWYDSLGAI…YLRYITIHKS (500 aa)) the chain is on the cytoplasmic side. Residues W401, S433, 457–464 (GSTGAGKT), and Q492 each bind ATP. The region spanning 422 to 645 (NGDNSLFFSN…RPDFSSKLMG (224 aa)) is the ABC transporter 1 domain. Residue C523 is the site of S-palmitoyl cysteine attachment. Residues S548 and S659 each carry the phosphoserine modification. The tract at residues 653-831 (SAERRNSILT…EEINEDDLKE (179 aa)) is disordered R region. S669 carries the post-translational modification Phosphoserine; by PKA. S685 is subject to Phosphoserine. K687 is covalently cross-linked (Glycyl lysine isopeptide (Lys-Gly) (interchain with G-Cter in ubiquitin)). S699 and S711 each carry phosphoserine. T716 carries the phosphothreonine modification. Phosphoserine occurs at positions 736, 767, 790, 795, and 813. Residues 859–879 (LIFVLIWCLVIFLAEVAASLV) traverse the membrane as a helical segment. The 297-residue stretch at 859 to 1155 (LIFVLIWCLV…AVNSSIDVDS (297 aa)) folds into the ABC transmembrane type-1 2 domain. Residues 880–918 (VLWLLKETPPQDSGNSTKGANNSYAVIITSTSSYYVFYI) are Extracellular-facing. Residues N894 and N900 are each glycosylated (N-linked (GlcNAc...) asparagine). A discontinuously helical transmembrane segment spans residues 919–939 (YVGVADTLLALGLFRGLPLVH). At 940-990 (TLITVSKILHHKMLHSVLQAPMSTLNTLKAGGILNRFSKDMAILDDLLPLT) the chain is on the cytoplasmic side. Residues 991–1011 (IFDFIQLLLIVIGAVAVVSVL) form a helical membrane-spanning segment. The Extracellular segment spans residues 1012 to 1013 (QP). The chain crosses the membrane as a helical span at residues 1014-1034 (YIFLATVPVIAAFIILRAYFL). At 1035 to 1095 (HTSQQLKQLE…TANWFLYLST (61 aa)) the chain is on the cytoplasmic side. The helical transmembrane segment at 1096–1116 (LRWFQMRIEMIFVIFFIAVTF) threads the bilayer. Residues 1117-1130 (ISILTTGEGEGTVG) are Extracellular-facing. A helical membrane pass occupies residues 1131 to 1151 (IILTLAMNIMSTLQWAVNSSI). The Cytoplasmic portion of the chain corresponds to 1152-1481 (DVDSLMRSVS…TEEEVQETRL (330 aa)). Residues 1211–1444 (MTVKDLTAKY…KSLFQQAISS (234 aa)) form the ABC transporter 2 domain. Residues Y1220 and 1245–1252 (GRTGSGKS) contribute to the ATP site. Residues 1387 to 1481 (RTLKQAFADC…TEEEVQETRL (95 aa)) are interaction with GORASP2. C1396 carries the S-palmitoyl cysteine lipid modification. S1445 and S1457 each carry phosphoserine. Positions 1449–1481 (KLFPHRNSSKHKSRSKIAALQEETEEEVQETRL) are disordered. Residues 1451-1463 (FPHRNSSKHKSRS) are compositionally biased toward basic residues. A compositionally biased stretch (acidic residues) spans 1470 to 1481 (EETEEEVQETRL). A PDZ-binding motif is present at residues 1479-1481 (TRL).

It belongs to the ABC transporter superfamily. ABCC family. CFTR transporter (TC 3.A.1.202) subfamily. In terms of assembly, monomer; does not require oligomerization for channel activity. May form oligomers in the membrane. Interacts with SLC26A3, SLC26A6 and NHERF1. Interacts with SHANK2. Interacts with MYO6. Interacts (via C-terminus) with GOPC (via PDZ domain); this promotes CFTR internalization and thereby decreases channel activity. Interacts with SLC4A7 through NHERF1. Found in a complex with MYO5B and RAB11A. Interacts with ANO1. Interacts with SLC26A8. Interacts with AHCYL1; the interaction increases CFTR activity. Interacts with CSE1L. The core-glycosylated form interacts with GORASP2 (via PDZ GRASP-type 1 domain) in respone to ER stress. Interacts with MARCHF2; the interaction leads to CFTR ubiqtuitination and degradation. Interacts with ADGRG2. In terms of processing, N-glycosylated. Post-translationally, phosphorylated; cAMP treatment promotes phosphorylation and activates the channel. Dephosphorylation decreases the ATPase activity (in vitro). Phosphorylation at PKA sites activates the channel. Phosphorylation at PKC sites enhances the response to phosphorylation by PKA. Phosphorylated by AMPK; this inhibits channel activity. Ubiquitinated, leading to its degradation in the lysosome. Deubiquitination by USP10 in early endosomes enhances its endocytic recycling to the cell membrane. Ubiquitinated by RNF185 during ER stress. Ubiquitinated by MARCHF2.

It is found in the apical cell membrane. The protein resides in the early endosome membrane. The protein localises to the cell membrane. Its subcellular location is the recycling endosome membrane. It localises to the endoplasmic reticulum membrane. It is found in the nucleus. It carries out the reaction ATP + H2O + closed Cl(-) channel = ADP + phosphate + open Cl(-) channel.. The catalysed reaction is chloride(in) = chloride(out). The enzyme catalyses hydrogencarbonate(in) = hydrogencarbonate(out). It catalyses the reaction ATP + H2O = ADP + phosphate + H(+). In terms of biological role, epithelial ion channel that plays an important role in the regulation of epithelial ion and water transport and fluid homeostasis. Mediates the transport of chloride ions across the cell membrane. Possesses an intrinsic ATPase activity and utilizes ATP to gate its channel; the passive flow of anions through the channel is gated by cycles of ATP binding and hydrolysis by the ATP-binding domains. The ion channel is also permeable to HCO(3)(-); selectivity depends on the extracellular chloride concentration. Exerts its function also by modulating the activity of other ion channels and transporters. Contributes to the regulation of the pH and the ion content of the epithelial fluid layer. Modulates the activity of the epithelial sodium channel (ENaC) complex, in part by regulating the cell surface expression of the ENaC complex. May regulate bicarbonate secretion and salvage in epithelial cells by regulating the transporter SLC4A7. Can inhibit the chloride channel activity of ANO1. Plays a role in the chloride and bicarbonate homeostasis during sperm epididymal maturation and capacitation. The chain is Cystic fibrosis transmembrane conductance regulator from Equus caballus (Horse).